The following is a 158-amino-acid chain: UPF0178 protein Rpal_2485 (158 aa).

Belongs to the UPF0178 family.

The protein is UPF0178 protein Rpal_2485 of Rhodopseudomonas palustris (strain TIE-1).